We begin with the raw amino-acid sequence, 314 residues long: Acetaldehyde dehydrogenase (314 aa).

14-17 provides a ligand contact to NAD(+); that stretch reads SGNI. The Acyl-thioester intermediate role is filled by cysteine 132. Residues 163–171 and asparagine 291 contribute to the NAD(+) site; that span reads SAGPGTRAN.

It belongs to the acetaldehyde dehydrogenase family.

It catalyses the reaction acetaldehyde + NAD(+) + CoA = acetyl-CoA + NADH + H(+). The chain is Acetaldehyde dehydrogenase from Polaromonas sp. (strain JS666 / ATCC BAA-500).